The following is a 184-amino-acid chain: uncharacterized protein (184 aa).

Belongs to the eIF-2B alpha/beta/delta subunits family.

This is an uncharacterized protein from Rhodospirillum rubrum.